Consider the following 267-residue polypeptide: Glutamate racemase (267 aa).

Substrate is bound by residues 13–14 and 45–46; these read DS and YS. The active-site Proton donor/acceptor is cysteine 77. Position 78–79 (78–79) interacts with substrate; sequence NT. Residue cysteine 188 is the Proton donor/acceptor of the active site. Residue 189–190 coordinates substrate; that stretch reads TH.

This sequence belongs to the aspartate/glutamate racemases family.

The catalysed reaction is L-glutamate = D-glutamate. It functions in the pathway cell wall biogenesis; peptidoglycan biosynthesis. Provides the (R)-glutamate required for cell wall biosynthesis. This Histophilus somni (strain 129Pt) (Haemophilus somnus) protein is Glutamate racemase.